The following is a 632-amino-acid chain: Pentatricopeptide repeat-containing protein ELI1, chloroplastic (632 aa).

A chloroplast-targeting transit peptide spans 1–19; the sequence is MASSPLLATSLPQNQLSTT. 10 PPR repeats span residues 94 to 128, 129 to 159, 160 to 194, 196 to 221, 222 to 256, 258 to 292, 293 to 323, 324 to 354, 360 to 395, and 396 to 426; these read DLFL…EINP, NEFT…GLGI, DPYV…SLVS, TAMI…MCER, DIVS…GKPK, DEIT…RIRL, NVKV…TPRK, DIVA…MQGI, TDIT…GIKP, and KIEH…MNMD. Residues 431–506 are type E motif; the sequence is LWSSVLGSCK…EPGISTIEIE (76 aa). Residues 497–512 form a required for function in RNA editing region; sequence EPGISTIEIENKVHEF. The interval 507 to 537 is type E(+) motif; sequence NKVHEFRAGDREHSKSKEIYTMLRKISERIK. Residues 538–632 are type DYW motif; that stretch reads SHGYVPNTNT…DGSCSCGDFW (95 aa).

Belongs to the PPR family. PCMP-H subfamily. Zn(2+) serves as cofactor.

Its subcellular location is the plastid. It is found in the chloroplast. Plays a major role in single RNA editing events in chloroplasts. Acts as a site-recognition transacting factor involved in the edition of the site 5 of ndhB1 and ndhB2 (ndhB1-5 and ndhB2-5 sites corresponding to cytidine-830), which are plastid-encoded subunits of the NADH-plastoquinone oxidoreductase. May provide the catalytic activity for editing site conversion. The sequence is that of Pentatricopeptide repeat-containing protein ELI1, chloroplastic from Arabidopsis thaliana (Mouse-ear cress).